A 300-amino-acid chain; its full sequence is Kynurenine formamidase (300 aa).

The HGGXW signature appears at 86 to 90 (HGGYW). Residue Ser157 is the Nucleophile of the active site. Catalysis depends on residues Asp244 and His276.

Belongs to the kynurenine formamidase family. In terms of assembly, homodimer.

The catalysed reaction is N-formyl-L-kynurenine + H2O = L-kynurenine + formate + H(+). The protein operates within amino-acid degradation; L-tryptophan degradation via kynurenine pathway; L-kynurenine from L-tryptophan: step 2/2. In terms of biological role, catalyzes the hydrolysis of N-formyl-L-kynurenine to L-kynurenine, the second step in the kynurenine pathway of tryptophan degradation. Required for elimination of toxic metabolites. In Drosophila melanogaster (Fruit fly), this protein is Kynurenine formamidase (KFase).